Reading from the N-terminus, the 658-residue chain is Threonine--tRNA ligase (658 aa).

Positions 1–64 (MSNTVSLQFP…GASGKVEIIT (64 aa)) constitute a TGS domain. Residues 246–548 (DHRRLGREMD…LIENFAGHMP (303 aa)) are catalytic. Positions 343, 394, and 525 each coordinate Zn(2+).

It belongs to the class-II aminoacyl-tRNA synthetase family. Homodimer. The cofactor is Zn(2+).

It is found in the cytoplasm. The catalysed reaction is tRNA(Thr) + L-threonine + ATP = L-threonyl-tRNA(Thr) + AMP + diphosphate + H(+). Its function is as follows. Catalyzes the attachment of threonine to tRNA(Thr) in a two-step reaction: L-threonine is first activated by ATP to form Thr-AMP and then transferred to the acceptor end of tRNA(Thr). Also edits incorrectly charged L-seryl-tRNA(Thr). The chain is Threonine--tRNA ligase from Brucella canis (strain ATCC 23365 / NCTC 10854 / RM-666).